The following is a 126-amino-acid chain: Basic phospholipase A2 1 (126 aa).

Residues Ser-1–Leu-7 constitute a propeptide that is removed on maturation. Disulfide bonds link Cys-18-Cys-78, Cys-33-Cys-125, Cys-35-Cys-51, Cys-50-Cys-106, Cys-57-Cys-99, Cys-67-Cys-92, and Cys-85-Cys-97. Residues Tyr-34, Gly-36, and Gly-38 each coordinate Ca(2+). His-54 is a catalytic residue. Asp-55 is a binding site for Ca(2+). Asp-100 is a catalytic residue.

Belongs to the phospholipase A2 family. Group I subfamily. D49 sub-subfamily. Heterodimer formed between two homologous isoforms: isoform 1 and isoform 2. Ca(2+) is required as a cofactor. Expressed by the venom gland.

The protein resides in the secreted. It catalyses the reaction a 1,2-diacyl-sn-glycero-3-phosphocholine + H2O = a 1-acyl-sn-glycero-3-phosphocholine + a fatty acid + H(+). Its function is as follows. PLA2 catalyzes the calcium-dependent hydrolysis of the 2-acyl groups in 3-sn-phosphoglycerides. The chain is Basic phospholipase A2 1 from Naja sagittifera (Andaman cobra).